Here is a 505-residue protein sequence, read N- to C-terminus: L-arabinose isomerase (505 aa).

Residues glutamate 308, glutamate 335, histidine 352, and histidine 453 each contribute to the Mn(2+) site.

This sequence belongs to the arabinose isomerase family. Mn(2+) serves as cofactor.

The enzyme catalyses beta-L-arabinopyranose = L-ribulose. The protein operates within carbohydrate degradation; L-arabinose degradation via L-ribulose; D-xylulose 5-phosphate from L-arabinose (bacterial route): step 1/3. Functionally, catalyzes the conversion of L-arabinose to L-ribulose. The polypeptide is L-arabinose isomerase (Bifidobacterium longum (strain DJO10A)).